The following is a 466-amino-acid chain: Uridine kinase-like protein 3 (466 aa).

A uridine kinase region spans residues 41-246; it reads HGQPFVIGVA…IVQHIHTKLG (206 aa). Residues 256 to 466 are uracil phosphoribosyltransferase; sequence NLYVIQSTFQ…GDRYFGTDDE (211 aa). GTP contacts are provided by residues lysine 280, arginine 289, and 323 to 326; that span reads CKKL. Residues arginine 333 and arginine 358 each contribute to the 5-phospho-alpha-D-ribose 1-diphosphate site. Arginine 378 serves as a coordination point for GTP. Residues aspartate 384, 389–392, and glutamate 455 contribute to the 5-phospho-alpha-D-ribose 1-diphosphate site; that span reads TGNS. 454–456 serves as a coordination point for uracil; the sequence is GEF.

This sequence in the N-terminal section; belongs to the uridine kinase family. The protein in the C-terminal section; belongs to the UPRTase family. Mg(2+) is required as a cofactor.

The catalysed reaction is UMP + diphosphate = 5-phospho-alpha-D-ribose 1-diphosphate + uracil. It carries out the reaction cytidine + ATP = CMP + ADP + H(+). It catalyses the reaction uridine + ATP = UMP + ADP + H(+). It participates in pyrimidine metabolism; UMP biosynthesis via salvage pathway; UMP from uracil: step 1/1. It functions in the pathway pyrimidine metabolism; CTP biosynthesis via salvage pathway; CTP from cytidine: step 1/3. Its pathway is pyrimidine metabolism; UMP biosynthesis via salvage pathway; UMP from uridine: step 1/1. With respect to regulation, allosterically activated by GTP. In terms of biological role, involved in the pyrimidine salvage pathway. The uracil phosphoribosyltransferase (UPRT) activity, that catalyzes the conversion of uracil and 5-phospho-alpha-D-ribose 1-diphosphate (PRPP) to UMP and diphosphate, is unsure. The chain is Uridine kinase-like protein 3 (UKL3) from Arabidopsis thaliana (Mouse-ear cress).